A 165-amino-acid polypeptide reads, in one-letter code: Glutamyl-tRNA(Gln) amidotransferase subunit F, mitochondrial (165 aa).

The transit peptide at 1–19 (MKSILRSTTRNLITSSRRF) directs the protein to the mitochondrion.

This sequence belongs to the GatF family. Subunit of the heterotrimeric GatFAB amidotransferase (AdT) complex, composed of A, B and F subunits.

Its subcellular location is the mitochondrion inner membrane. It catalyses the reaction L-glutamyl-tRNA(Gln) + L-glutamine + ATP + H2O = L-glutaminyl-tRNA(Gln) + L-glutamate + ADP + phosphate + H(+). In terms of biological role, allows the formation of correctly charged Gln-tRNA(Gln) through the transamidation of misacylated Glu-tRNA(Gln) in the mitochondria. The reaction takes place in the presence of glutamine and ATP through an activated gamma-phospho-Glu-tRNA(Gln). Required for proper protein synthesis within the mitochondrion. The polypeptide is Glutamyl-tRNA(Gln) amidotransferase subunit F, mitochondrial (Candida albicans (strain WO-1) (Yeast)).